A 681-amino-acid chain; its full sequence is Glutamine--fructose-6-phosphate aminotransferase [isomerizing] 1 (681 aa).

The active-site For GATase activity is the Cys2. Residues 2-287 (CGIFAYLNYH…DDDVAAVVDG (286 aa)) form the Glutamine amidotransferase type-2 domain. Phosphoserine is present on residues Ser103 and Ser243. The segment at 295–662 (KRTARDHPGR…LQLLAFHLAV (368 aa)) is isomerase. SIS domains follow at residues 359–498 (HIKE…DRIS) and 530–671 (LATE…VDFP). Residues 376–377 (TS), 421–423 (SQS), Thr426, and His577 contribute to the substrate site.

Homotetramer, may also exist as homodimers.

It catalyses the reaction D-fructose 6-phosphate + L-glutamine = D-glucosamine 6-phosphate + L-glutamate. Its pathway is nucleotide-sugar biosynthesis; UDP-N-acetyl-alpha-D-glucosamine biosynthesis; alpha-D-glucosamine 6-phosphate from D-fructose 6-phosphate: step 1/1. Its activity is regulated as follows. Inhibited by 4,4'-dithiodipyridine. In terms of biological role, controls the flux of glucose into the hexosamine pathway. Most likely involved in regulating the availability of precursors for N- and O-linked glycosylation of proteins. Regulates the circadian expression of clock genes BMAL1 and CRY1. Has a role in fine tuning the metabolic fluctuations of cytosolic UDP-GlcNAc and its effects on hyaluronan synthesis that occur during tissue remodeling. This chain is Glutamine--fructose-6-phosphate aminotransferase [isomerizing] 1 (Gfpt1), found in Rattus norvegicus (Rat).